A 138-amino-acid chain; its full sequence is Acidic phospholipase A2 jerdoxin (138 aa).

The signal sequence occupies residues 1–16; that stretch reads MRTLWIMAVLLVGVEG. 7 disulfide bridges follow: C42–C131, C44–C60, C59–C111, C65–C138, C66–C104, C73–C97, and C91–C102. Residues Y43, G45, and G47 each coordinate Ca(2+). H63 is a catalytic residue. D64 is a binding site for Ca(2+). Residue D105 is part of the active site.

This sequence belongs to the phospholipase A2 family. Group II subfamily. D49 sub-subfamily. Monomer. Requires Ca(2+) as cofactor. As to expression, expressed by the venom gland.

The protein resides in the secreted. It catalyses the reaction a 1,2-diacyl-sn-glycero-3-phosphocholine + H2O = a 1-acyl-sn-glycero-3-phosphocholine + a fatty acid + H(+). In terms of biological role, snake venom phospholipase A2 (PLA2) that displays edema-inducing activities, exhibits indirect hemolytic activity, and inhibits ADP-induced platelet aggregation. PLA2 catalyzes the calcium-dependent hydrolysis of the 2-acyl groups in 3-sn-phosphoglycerides. The sequence is that of Acidic phospholipase A2 jerdoxin from Protobothrops jerdonii (Jerdon's pitviper).